A 107-amino-acid polypeptide reads, in one-letter code: UPF0145 protein YbjQ (107 aa).

It belongs to the UPF0145 family.

In Shigella flexneri, this protein is UPF0145 protein YbjQ.